Here is a 215-residue protein sequence, read N- to C-terminus: Ribonuclease HII (215 aa).

The RNase H type-2 domain maps to 19–214; it reads KNVIGVDEAG…KILETEEEKT (196 aa). A divalent metal cation-binding residues include Asp25, Glu26, and Asp121.

It belongs to the RNase HII family. The cofactor is Mn(2+). Mg(2+) is required as a cofactor.

It is found in the cytoplasm. The catalysed reaction is Endonucleolytic cleavage to 5'-phosphomonoester.. Endonuclease that specifically degrades the RNA of RNA-DNA hybrids. The sequence is that of Ribonuclease HII from Fusobacterium nucleatum subsp. nucleatum (strain ATCC 25586 / DSM 15643 / BCRC 10681 / CIP 101130 / JCM 8532 / KCTC 2640 / LMG 13131 / VPI 4355).